The chain runs to 143 residues: Small ribosomal subunit protein bS6 (143 aa).

A disordered region spans residues 100-143 (QSFIMKSKDDKGDKPERRRRDDDESGDVGVSNDSDNDGGNAEAA). Positions 105 to 121 (KSKDDKGDKPERRRRDD) are enriched in basic and acidic residues. Residues 126-143 (DVGVSNDSDNDGGNAEAA) are compositionally biased toward low complexity.

The protein belongs to the bacterial ribosomal protein bS6 family.

In terms of biological role, binds together with bS18 to 16S ribosomal RNA. This Xylella fastidiosa (strain M12) protein is Small ribosomal subunit protein bS6.